We begin with the raw amino-acid sequence, 294 residues long: StAR-related lipid transfer protein 3 (294 aa).

The 66-residue stretch at 1 to 66 (DGYICNNGMD…YSPPESLAGS (66 aa)) folds into the MENTAL domain. An FFAT motif is present at residues 55 to 61 (QFYSPPE). The interval 58 to 77 (SPPESLAGSEEDLDEEGLGR) is disordered. One can recognise an START domain in the interval 79–292 (AVSPQEKALV…LRQRIRDLRS (214 aa)).

Belongs to the STARD3 family. In terms of assembly, homodimer. In terms of processing, phosphorylated. Phosphorylation allows the tethering of two membranes that participates in the formation of ER-endosome contacts. Phosphorylation of FFAT motif drives membrane tethering between the endoplasmic reticulum and late endosomes that in turn allows the efficient transport of sterol mediated by the START domain.

The protein localises to the late endosome membrane. The catalysed reaction is cholesterol(in) = cholesterol(out). In terms of biological role, sterol-binding protein that mediates cholesterol transport from the endoplasmic reticulum to endosomes. The sterol transport mechanism is triggered by phosphorylation of FFAT motif that leads to membrane tethering between the endoplasmic reticulum and late endosomes. Acts as a lipid transfer protein that redirects sterol to the endosome at the expense of the cell membrane and favors membrane formation inside endosomes. The sequence is that of StAR-related lipid transfer protein 3 from Salvelinus fontinalis (Brook trout).